Reading from the N-terminus, the 676-residue chain is DNA ligase (676 aa).

NAD(+)-binding positions include 34–38 (DAEYD), 84–85 (SL), and E116. The N6-AMP-lysine intermediate role is filled by K118. NAD(+)-binding residues include R139, E174, K294, and K318. Zn(2+) is bound by residues C412, C415, C428, and C433. A BRCT domain is found at 589–676 (KGGEALKGLT…RTGKKAEELV (88 aa)).

The protein belongs to the NAD-dependent DNA ligase family. LigA subfamily. It depends on Mg(2+) as a cofactor. Mn(2+) serves as cofactor.

It carries out the reaction NAD(+) + (deoxyribonucleotide)n-3'-hydroxyl + 5'-phospho-(deoxyribonucleotide)m = (deoxyribonucleotide)n+m + AMP + beta-nicotinamide D-nucleotide.. Functionally, DNA ligase that catalyzes the formation of phosphodiester linkages between 5'-phosphoryl and 3'-hydroxyl groups in double-stranded DNA using NAD as a coenzyme and as the energy source for the reaction. It is essential for DNA replication and repair of damaged DNA. This Thermus thermophilus (strain ATCC 27634 / DSM 579 / HB8) protein is DNA ligase.